We begin with the raw amino-acid sequence, 91 residues long: Sec-independent protein translocase protein TatA (91 aa).

A helical transmembrane segment spans residues 2–22; the sequence is ANLGFPELVLIAVVILVLFGW. Residues 43-55 are compositionally biased toward basic and acidic residues; sequence VSEMKNDGAEAEK. Residues 43–91 are disordered; it reads VSEMKNDGAEAEKTSAASTKTDEITSVSSTDTPQPTVTVESKDEKKHPA. The segment covering 57–81 has biased composition (polar residues); that stretch reads SAASTKTDEITSVSSTDTPQPTVTV. The segment covering 82-91 has biased composition (basic and acidic residues); that stretch reads ESKDEKKHPA.

Belongs to the TatA/E family. The Tat system comprises two distinct complexes: a TatABC complex, containing multiple copies of TatA, TatB and TatC subunits, and a separate TatA complex, containing only TatA subunits. Substrates initially bind to the TatABC complex, which probably triggers association of the separate TatA complex to form the active translocon.

The protein resides in the cell membrane. Functionally, part of the twin-arginine translocation (Tat) system that transports large folded proteins containing a characteristic twin-arginine motif in their signal peptide across membranes. TatA could form the protein-conducting channel of the Tat system. The polypeptide is Sec-independent protein translocase protein TatA (Corynebacterium kroppenstedtii (strain DSM 44385 / JCM 11950 / CIP 105744 / CCUG 35717)).